Reading from the N-terminus, the 277-residue chain is Large ribosomal subunit protein uL2 (277 aa).

The interval 219-277 (TVRGSVMNPNDHPHGGGEGRSPIGHPSPRTPWGKPALGYKTRKNKKYSDRFIVKRRHDK) is disordered.

It belongs to the universal ribosomal protein uL2 family. In terms of assembly, part of the 50S ribosomal subunit. Forms a bridge to the 30S subunit in the 70S ribosome.

Its function is as follows. One of the primary rRNA binding proteins. Required for association of the 30S and 50S subunits to form the 70S ribosome, for tRNA binding and peptide bond formation. It has been suggested to have peptidyltransferase activity; this is somewhat controversial. Makes several contacts with the 16S rRNA in the 70S ribosome. This Clostridium botulinum (strain ATCC 19397 / Type A) protein is Large ribosomal subunit protein uL2.